A 520-amino-acid polypeptide reads, in one-letter code: FNIP repeat-containing protein DDB_G0274063/DDB_G0272642 (520 aa).

Disordered stretches follow at residues 47–86 (QQQS…IDNR) and 100–121 (NISS…SSSS). A compositionally biased stretch (low complexity) spans 51–84 (NNNNNNNNNNNNNNNNNNFINFSNHTNNINNNID). 4 FNIP repeats span residues 242–285 (YNNN…FGES), 286–331 (FNQD…FGLS), 332–406 (YNQP…FGVQ), and 453–496 (FNQQ…FHNS).

The polypeptide is FNIP repeat-containing protein DDB_G0274063/DDB_G0272642 (Dictyostelium discoideum (Social amoeba)).